The sequence spans 511 residues: Coatomer subunit delta (511 aa).

Basic and acidic residues predominate over residues 168–177; that stretch reads QARRDAERQG. Residues 168–196 are disordered; it reads QARRDAERQGKKAPGFGGFGSSTVSGGST. Ser-223 is subject to Phosphoserine. Lys-233 and Lys-241 each carry N6-acetyllysine. Ser-244 carries the post-translational modification Phosphoserine. Positions 271-511 constitute an MHD domain; sequence MESVHMKIEE…TFLVDKYEIL (241 aa). An N6-acetyllysine mark is found at Lys-309 and Lys-351. Ser-493 carries the post-translational modification Phosphoserine.

Belongs to the adaptor complexes medium subunit family. Delta-COP subfamily. As to quaternary structure, oligomeric complex that consists of at least the alpha, beta, beta', gamma, delta, epsilon and zeta subunits. As to expression, ubiquitously expressed.

It localises to the cytoplasm. The protein localises to the golgi apparatus membrane. Its subcellular location is the cytoplasmic vesicle. The protein resides in the COPI-coated vesicle membrane. Functionally, the coatomer is a cytosolic protein complex that binds to dilysine motifs and reversibly associates with Golgi non-clathrin-coated vesicles, which further mediate biosynthetic protein transport from the ER, via the Golgi up to the trans Golgi network. Coatomer complex is required for budding from Golgi membranes, and is essential for the retrograde Golgi-to-ER transport of dilysine-tagged proteins. In mammals, the coatomer can only be recruited by membranes associated to ADP-ribosylation factors (ARFs), which are small GTP-binding proteins; the complex also influences the Golgi structural integrity, as well as the processing, activity, and endocytic recycling of LDL receptors. This is Coatomer subunit delta (ARCN1) from Bos taurus (Bovine).